The primary structure comprises 323 residues: Lipoyl synthase (323 aa).

7 residues coordinate [4Fe-4S] cluster: Cys-61, Cys-66, Cys-72, Cys-87, Cys-91, Cys-94, and Ser-300. The region spanning 73–289 (WDKKHATFMI…ETVAYSKGFL (217 aa)) is the Radical SAM core domain.

The protein belongs to the radical SAM superfamily. Lipoyl synthase family. [4Fe-4S] cluster is required as a cofactor.

The protein localises to the cytoplasm. It carries out the reaction [[Fe-S] cluster scaffold protein carrying a second [4Fe-4S](2+) cluster] + N(6)-octanoyl-L-lysyl-[protein] + 2 oxidized [2Fe-2S]-[ferredoxin] + 2 S-adenosyl-L-methionine + 4 H(+) = [[Fe-S] cluster scaffold protein] + N(6)-[(R)-dihydrolipoyl]-L-lysyl-[protein] + 4 Fe(3+) + 2 hydrogen sulfide + 2 5'-deoxyadenosine + 2 L-methionine + 2 reduced [2Fe-2S]-[ferredoxin]. The protein operates within protein modification; protein lipoylation via endogenous pathway; protein N(6)-(lipoyl)lysine from octanoyl-[acyl-carrier-protein]: step 2/2. Functionally, catalyzes the radical-mediated insertion of two sulfur atoms into the C-6 and C-8 positions of the octanoyl moiety bound to the lipoyl domains of lipoate-dependent enzymes, thereby converting the octanoylated domains into lipoylated derivatives. The polypeptide is Lipoyl synthase (Rhizobium etli (strain ATCC 51251 / DSM 11541 / JCM 21823 / NBRC 15573 / CFN 42)).